Reading from the N-terminus, the 235-residue chain is Ribonuclease HII (235 aa).

Positions 23-212 constitute an RNase H type-2 domain; that stretch reads GLVAGVDEAG…VAHVVSIARM (190 aa). Residues Asp29, Glu30, and Asp121 each coordinate a divalent metal cation.

It belongs to the RNase HII family. Mn(2+) is required as a cofactor. Mg(2+) serves as cofactor.

It is found in the cytoplasm. The catalysed reaction is Endonucleolytic cleavage to 5'-phosphomonoester.. Endonuclease that specifically degrades the RNA of RNA-DNA hybrids. The polypeptide is Ribonuclease HII (Delftia acidovorans (strain DSM 14801 / SPH-1)).